A 156-amino-acid polypeptide reads, in one-letter code: Ribosomal RNA large subunit methyltransferase H (156 aa).

Residues Leu73, Gly104, and 123–128 (LSDLTL) each bind S-adenosyl-L-methionine.

The protein belongs to the RNA methyltransferase RlmH family. In terms of assembly, homodimer.

Its subcellular location is the cytoplasm. It catalyses the reaction pseudouridine(1915) in 23S rRNA + S-adenosyl-L-methionine = N(3)-methylpseudouridine(1915) in 23S rRNA + S-adenosyl-L-homocysteine + H(+). Specifically methylates the pseudouridine at position 1915 (m3Psi1915) in 23S rRNA. The sequence is that of Ribosomal RNA large subunit methyltransferase H from Methylibium petroleiphilum (strain ATCC BAA-1232 / LMG 22953 / PM1).